Here is a 130-residue protein sequence, read N- to C-terminus: Small ribosomal subunit protein uS9 (130 aa).

It belongs to the universal ribosomal protein uS9 family.

The sequence is that of Small ribosomal subunit protein uS9 from Streptococcus gordonii (strain Challis / ATCC 35105 / BCRC 15272 / CH1 / DL1 / V288).